We begin with the raw amino-acid sequence, 615 residues long: Threonine--tRNA ligase (615 aa).

Residues M1–T132 are editing domain. Positions P196–P495 are catalytic. Residues C288, H340, and H464 each contribute to the Zn(2+) site.

It belongs to the class-II aminoacyl-tRNA synthetase family. Homodimer. Zn(2+) serves as cofactor.

The protein resides in the cytoplasm. The enzyme catalyses tRNA(Thr) + L-threonine + ATP = L-threonyl-tRNA(Thr) + AMP + diphosphate + H(+). Functionally, catalyzes the attachment of threonine to tRNA(Thr) in a two-step reaction: L-threonine is first activated by ATP to form Thr-AMP and then transferred to the acceptor end of tRNA(Thr). Also edits incorrectly charged L-seryl-tRNA(Thr). The polypeptide is Threonine--tRNA ligase (thrS) (Cenarchaeum symbiosum (strain A)).